A 170-amino-acid polypeptide reads, in one-letter code: Peptidyl-prolyl cis-trans isomerase-like 3 (170 aa).

The PPIase cyclophilin-type domain occupies 1 to 160 (MSVTLHTDLG…QEFRIKSVTI (160 aa)).

This sequence belongs to the cyclophilin-type PPIase family. PPIL3 subfamily.

The catalysed reaction is [protein]-peptidylproline (omega=180) = [protein]-peptidylproline (omega=0). Functionally, PPIases accelerate the folding of proteins. It catalyzes the cis-trans isomerization of proline imidic peptide bonds in oligopeptides. This Rhizopus delemar (strain RA 99-880 / ATCC MYA-4621 / FGSC 9543 / NRRL 43880) (Mucormycosis agent) protein is Peptidyl-prolyl cis-trans isomerase-like 3 (cyp4).